We begin with the raw amino-acid sequence, 57 residues long: Large ribosomal subunit protein uL30 (57 aa).

It belongs to the universal ribosomal protein uL30 family. As to quaternary structure, part of the 50S ribosomal subunit.

The polypeptide is Large ribosomal subunit protein uL30 (Maridesulfovibrio salexigens (strain ATCC 14822 / DSM 2638 / NCIMB 8403 / VKM B-1763) (Desulfovibrio salexigens)).